The following is a 691-amino-acid chain: Elongation factor G (691 aa).

Residues 8-282 (ERVRNIGIAA…AVIDYLPAPV (275 aa)) enclose the tr-type G domain. Residues 17-24 (AHIDAGKT), 81-85 (DTPGH), and 135-138 (NKMD) each bind GTP.

Belongs to the TRAFAC class translation factor GTPase superfamily. Classic translation factor GTPase family. EF-G/EF-2 subfamily.

Its subcellular location is the cytoplasm. Functionally, catalyzes the GTP-dependent ribosomal translocation step during translation elongation. During this step, the ribosome changes from the pre-translocational (PRE) to the post-translocational (POST) state as the newly formed A-site-bound peptidyl-tRNA and P-site-bound deacylated tRNA move to the P and E sites, respectively. Catalyzes the coordinated movement of the two tRNA molecules, the mRNA and conformational changes in the ribosome. The chain is Elongation factor G from Synechococcus sp. (strain CC9605).